Reading from the N-terminus, the 855-residue chain is DNA mismatch repair protein MutS (855 aa).

616-623 (GPNMGGKS) is an ATP binding site.

The protein belongs to the DNA mismatch repair MutS family.

Functionally, this protein is involved in the repair of mismatches in DNA. It is possible that it carries out the mismatch recognition step. This protein has a weak ATPase activity. The polypeptide is DNA mismatch repair protein MutS (Escherichia coli O139:H28 (strain E24377A / ETEC)).